Here is a 546-residue protein sequence, read N- to C-terminus: Probable bifunctional SAT/APS kinase (546 aa).

Residues 1-370 are sulfate adenylyltransferase; that stretch reads MEKIKYLKSI…LAETYVPKHK (370 aa). Residues 371–546 are adenylsulfate kinase; that stretch reads QGFCVWLTGL…FLKKEGFIKD (176 aa). 379–386 contributes to the ATP binding site; sequence GLPCAGKS. The Phosphoserine intermediate role is filled by S453.

The protein in the N-terminal section; belongs to the sulfate adenylyltransferase family. It in the C-terminal section; belongs to the APS kinase family.

The catalysed reaction is sulfate + ATP + H(+) = adenosine 5'-phosphosulfate + diphosphate. It catalyses the reaction adenosine 5'-phosphosulfate + ATP = 3'-phosphoadenylyl sulfate + ADP + H(+). Its pathway is sulfur metabolism; hydrogen sulfide biosynthesis; sulfite from sulfate: step 1/3. The protein operates within sulfur metabolism; hydrogen sulfide biosynthesis; sulfite from sulfate: step 2/3. The protein is Probable bifunctional SAT/APS kinase (sat/cysC) of Aquifex aeolicus (strain VF5).